Consider the following 347-residue polypeptide: S-adenosylmethionine decarboxylase proenzyme 4 (347 aa).

Active-site residues include E7 and E10. E66 serves as a coordination point for substrate. S67 acts as the Schiff-base intermediate with substrate; via pyruvic acid in catalysis. S67 carries the post-translational modification Pyruvic acid (Ser); by autocatalysis. C81 (proton donor; for catalytic activity) is an active-site residue. Catalysis depends on proton acceptor; for processing activity residues S237 and H250. E254 lines the substrate pocket.

Belongs to the eukaryotic AdoMetDC family. Pyruvate is required as a cofactor. Is synthesized initially as an inactive proenzyme. Formation of the active enzyme involves a self-maturation process in which the active site pyruvoyl group is generated from an internal serine residue via an autocatalytic post-translational modification. Two non-identical subunits are generated from the proenzyme in this reaction, and the pyruvate is formed at the N-terminus of the alpha chain, which is derived from the carboxyl end of the proenzyme. The post-translation cleavage follows an unusual pathway, termed non-hydrolytic serinolysis, in which the side chain hydroxyl group of the serine supplies its oxygen atom to form the C-terminus of the beta chain, while the remainder of the serine residue undergoes an oxidative deamination to produce ammonia and the pyruvoyl group blocking the N-terminus of the alpha chain.

It catalyses the reaction S-adenosyl-L-methionine + H(+) = S-adenosyl 3-(methylsulfanyl)propylamine + CO2. Its pathway is amine and polyamine biosynthesis; S-adenosylmethioninamine biosynthesis; S-adenosylmethioninamine from S-adenosyl-L-methionine: step 1/1. In terms of biological role, essential for biosynthesis of the polyamines spermidine and spermine. Essential for polyamine homeostasis, and normal plant embryogenesis, growth and development. In Arabidopsis thaliana (Mouse-ear cress), this protein is S-adenosylmethionine decarboxylase proenzyme 4.